The chain runs to 290 residues: Phosphatidylglycerol--prolipoprotein diacylglyceryl transferase (290 aa).

Helical transmembrane passes span 21–41 (VSLH…MWLA), 60–80 (LLYA…VLFY), 98–118 (GGMS…WFAH), 124–144 (FFQV…AGRL), 198–218 (SQLY…NLFI), 224–244 (IGSV…LVEF), and 258–278 (VISM…IMMA). R143 contacts a 1,2-diacyl-sn-glycero-3-phospho-(1'-sn-glycerol).

This sequence belongs to the Lgt family.

The protein localises to the cell inner membrane. The enzyme catalyses L-cysteinyl-[prolipoprotein] + a 1,2-diacyl-sn-glycero-3-phospho-(1'-sn-glycerol) = an S-1,2-diacyl-sn-glyceryl-L-cysteinyl-[prolipoprotein] + sn-glycerol 1-phosphate + H(+). It participates in protein modification; lipoprotein biosynthesis (diacylglyceryl transfer). Functionally, catalyzes the transfer of the diacylglyceryl group from phosphatidylglycerol to the sulfhydryl group of the N-terminal cysteine of a prolipoprotein, the first step in the formation of mature lipoproteins. This is Phosphatidylglycerol--prolipoprotein diacylglyceryl transferase from Sodalis glossinidius (strain morsitans).